The following is a 218-amino-acid chain: Albicidin resistance protein (218 aa).

It is found in the periplasm. Albicidin resistance protein binds to form a complex without antibiotic activity but without catalyzing any further chemical modifications to albicidin. This Klebsiella oxytoca protein is Albicidin resistance protein.